Consider the following 811-residue polypeptide: DNA mismatch repair protein MutS (811 aa).

An ATP-binding site is contributed by 583 to 590; that stretch reads GPNMAGKS.

Belongs to the DNA mismatch repair MutS family.

Its function is as follows. This protein is involved in the repair of mismatches in DNA. It is possible that it carries out the mismatch recognition step. This protein has a weak ATPase activity. This Thermus thermophilus (strain ATCC BAA-163 / DSM 7039 / HB27) protein is DNA mismatch repair protein MutS.